Reading from the N-terminus, the 273-residue chain is Dermonecrotic toxin LhSicTox-alphaIA2bi (273 aa).

Residues E25 and D27 each contribute to the Mg(2+) site. H41 functions as the Nucleophile in the catalytic mechanism. Intrachain disulfides connect C45-C51 and C47-C190. D85 serves as a coordination point for Mg(2+).

It belongs to the arthropod phospholipase D family. Class II subfamily. It depends on Mg(2+) as a cofactor. As to expression, expressed by the venom gland.

The protein localises to the secreted. It catalyses the reaction an N-(acyl)-sphingosylphosphocholine = an N-(acyl)-sphingosyl-1,3-cyclic phosphate + choline. The catalysed reaction is an N-(acyl)-sphingosylphosphoethanolamine = an N-(acyl)-sphingosyl-1,3-cyclic phosphate + ethanolamine. The enzyme catalyses a 1-acyl-sn-glycero-3-phosphocholine = a 1-acyl-sn-glycero-2,3-cyclic phosphate + choline. It carries out the reaction a 1-acyl-sn-glycero-3-phosphoethanolamine = a 1-acyl-sn-glycero-2,3-cyclic phosphate + ethanolamine. In terms of biological role, dermonecrotic toxins cleave the phosphodiester linkage between the phosphate and headgroup of certain phospholipids (sphingolipid and lysolipid substrates), forming an alcohol (often choline) and a cyclic phosphate. This toxin acts on sphingomyelin (SM). It may also act on ceramide phosphoethanolamine (CPE), lysophosphatidylcholine (LPC) and lysophosphatidylethanolamine (LPE), but not on lysophosphatidylserine (LPS), and lysophosphatidylglycerol (LPG). It acts by transphosphatidylation, releasing exclusively cyclic phosphate products as second products. Induces dermonecrosis, hemolysis, increased vascular permeability, edema, inflammatory response, and platelet aggregation. The protein is Dermonecrotic toxin LhSicTox-alphaIA2bi of Loxosceles hirsuta (Recluse spider).